A 626-amino-acid polypeptide reads, in one-letter code: Probable serine/threonine-protein kinase CCRP1 (626 aa).

A Protein kinase domain is found at 36–291 (YSKGRMLGKG…LDEILQHPFL (256 aa)). ATP is bound by residues 42–50 (LGKGGFAKC) and lysine 65. A Phosphoserine modification is found at serine 71. Aspartate 159 acts as the Proton acceptor in catalysis. A disordered region spans residues 399–433 (NFTKTGSWQSNLNGTQSVKGSSRPQTVQQKGDLKS). The segment covering 400-427 (FTKTGSWQSNLNGTQSVKGSSRPQTVQQ) has biased composition (polar residues). POLO box domains follow at residues 471-554 (WVKK…YLEG) and 574-626 (YVKK…PISP).

Belongs to the protein kinase superfamily. Ser/Thr protein kinase family. CDC5/Polo subfamily. In terms of tissue distribution, embryo.

It catalyses the reaction L-seryl-[protein] + ATP = O-phospho-L-seryl-[protein] + ADP + H(+). The catalysed reaction is L-threonyl-[protein] + ATP = O-phospho-L-threonyl-[protein] + ADP + H(+). May play a role in the division of some cell types. In Zea mays (Maize), this protein is Probable serine/threonine-protein kinase CCRP1 (CCRP1).